The primary structure comprises 459 residues: ATP synthase subunit beta (459 aa).

G148–T155 provides a ligand contact to ATP.

Belongs to the ATPase alpha/beta chains family. As to quaternary structure, F-type ATPases have 2 components, CF(1) - the catalytic core - and CF(0) - the membrane proton channel. CF(1) has five subunits: alpha(3), beta(3), gamma(1), delta(1), epsilon(1). CF(0) has three main subunits: a(1), b(2) and c(9-12). The alpha and beta chains form an alternating ring which encloses part of the gamma chain. CF(1) is attached to CF(0) by a central stalk formed by the gamma and epsilon chains, while a peripheral stalk is formed by the delta and b chains.

It localises to the cell inner membrane. It carries out the reaction ATP + H2O + 4 H(+)(in) = ADP + phosphate + 5 H(+)(out). Produces ATP from ADP in the presence of a proton gradient across the membrane. The catalytic sites are hosted primarily by the beta subunits. This Ruthia magnifica subsp. Calyptogena magnifica protein is ATP synthase subunit beta.